Reading from the N-terminus, the 181-residue chain is MEQFRGTTILSVRRNGKVVIGGDGQVSMGSTIMKANARKVRRLYNGKVIAGFAGGTADAFTLFERFESKLEKHSGNLTRAAVELAKDWRTDRILRRLEALLTVADSKASLIITGLGDVIEPEQSLMAIGSGGSFAQAAAKALLENTKLSARKIVEKALTIAADICIYTNLNFTIEELDSES.

T7 is an active-site residue. Na(+)-binding residues include A162, C165, and T168.

Belongs to the peptidase T1B family. HslV subfamily. In terms of assembly, a double ring-shaped homohexamer of HslV is capped on each side by a ring-shaped HslU homohexamer. The assembly of the HslU/HslV complex is dependent on binding of ATP.

Its subcellular location is the cytoplasm. The catalysed reaction is ATP-dependent cleavage of peptide bonds with broad specificity.. With respect to regulation, allosterically activated by HslU binding. In terms of biological role, protease subunit of a proteasome-like degradation complex believed to be a general protein degrading machinery. This is ATP-dependent protease subunit HslV from Coxiella burnetii (strain RSA 493 / Nine Mile phase I).